A 289-amino-acid polypeptide reads, in one-letter code: Formamidopyrimidine-DNA glycosylase (289 aa).

The active-site Schiff-base intermediate with DNA is proline 2. Glutamate 3 serves as the catalytic Proton donor. The active-site Proton donor; for beta-elimination activity is lysine 60. Residues histidine 94, arginine 126, and arginine 167 each contribute to the DNA site. The FPG-type zinc finger occupies 252–287 (QVYGKPAGTPCPRCGTGLARIRIAGRSSVFCPRCQP). Catalysis depends on arginine 277, which acts as the Proton donor; for delta-elimination activity.

It belongs to the FPG family. In terms of assembly, monomer. Zn(2+) is required as a cofactor.

It carries out the reaction Hydrolysis of DNA containing ring-opened 7-methylguanine residues, releasing 2,6-diamino-4-hydroxy-5-(N-methyl)formamidopyrimidine.. The enzyme catalyses 2'-deoxyribonucleotide-(2'-deoxyribose 5'-phosphate)-2'-deoxyribonucleotide-DNA = a 3'-end 2'-deoxyribonucleotide-(2,3-dehydro-2,3-deoxyribose 5'-phosphate)-DNA + a 5'-end 5'-phospho-2'-deoxyribonucleoside-DNA + H(+). Its function is as follows. Involved in base excision repair of DNA damaged by oxidation or by mutagenic agents. Acts as a DNA glycosylase that recognizes and removes damaged bases. Has a preference for oxidized purines, such as 7,8-dihydro-8-oxoguanine (8-oxoG). Has AP (apurinic/apyrimidinic) lyase activity and introduces nicks in the DNA strand. Cleaves the DNA backbone by beta-delta elimination to generate a single-strand break at the site of the removed base with both 3'- and 5'-phosphates. The protein is Formamidopyrimidine-DNA glycosylase of Thermomicrobium roseum (strain ATCC 27502 / DSM 5159 / P-2).